Here is a 132-residue protein sequence, read N- to C-terminus: ATP synthase epsilon chain (132 aa).

This sequence belongs to the ATPase epsilon chain family. In terms of assembly, F-type ATPases have 2 components, CF(1) - the catalytic core - and CF(0) - the membrane proton channel. CF(1) has five subunits: alpha(3), beta(3), gamma(1), delta(1), epsilon(1). CF(0) has four main subunits: a, b, b' and c.

The protein resides in the cellular chromatophore membrane. Its function is as follows. Produces ATP from ADP in the presence of a proton gradient across the membrane. This Rhodobacter capsulatus (Rhodopseudomonas capsulata) protein is ATP synthase epsilon chain (atpC).